A 325-amino-acid polypeptide reads, in one-letter code: Ferrochelatase (325 aa).

The Fe cation site is built by histidine 172 and glutamate 267.

The protein belongs to the ferrochelatase family.

The protein resides in the cytoplasm. The catalysed reaction is heme b + 2 H(+) = protoporphyrin IX + Fe(2+). It participates in porphyrin-containing compound metabolism; protoheme biosynthesis; protoheme from protoporphyrin-IX: step 1/1. In terms of biological role, catalyzes the ferrous insertion into protoporphyrin IX. This chain is Ferrochelatase, found in Acidobacterium capsulatum (strain ATCC 51196 / DSM 11244 / BCRC 80197 / JCM 7670 / NBRC 15755 / NCIMB 13165 / 161).